The chain runs to 512 residues: Glycerol kinase, glycosomal (512 aa).

Thr-11 lines the substrate pocket. Arg-15 lines the ATP pocket. Residues Arg-84, Tyr-139, and Asp-254 each coordinate substrate. Residues Thr-276, Gly-321, and 422-426 (GLSKN) each bind ATP. Residues 510–512 (AKL) carry the Microbody targeting signal motif.

Belongs to the FGGY kinase family.

It localises to the glycosome. It catalyses the reaction glycerol + ATP = sn-glycerol 3-phosphate + ADP + H(+). Its pathway is polyol metabolism; glycerol degradation via glycerol kinase pathway; sn-glycerol 3-phosphate from glycerol: step 1/1. In terms of biological role, catalyzes the phosphorylation of glycerol using ATP. Under anoxic conditions, when glycerol 3-phosphate accumulates in the glycosome, it catalyzes the reverse reaction, maintaining the ATP balance. Key enzyme for the survival of bloodstream forms under anoxic conditions. The sequence is that of Glycerol kinase, glycosomal (GK) from Trypanosoma brucei brucei.